The following is a 241-amino-acid chain: Orotidine 5'-phosphate decarboxylase (241 aa).

Substrate-binding positions include Asp16, Lys37, 64–73, Thr128, Arg190, Gln199, Gly219, and Arg220; that span reads DLKFHDIPTT. Lys66 (proton donor) is an active-site residue.

Belongs to the OMP decarboxylase family. Type 1 subfamily. In terms of assembly, homodimer.

It carries out the reaction orotidine 5'-phosphate + H(+) = UMP + CO2. Its pathway is pyrimidine metabolism; UMP biosynthesis via de novo pathway; UMP from orotate: step 2/2. Functionally, catalyzes the decarboxylation of orotidine 5'-monophosphate (OMP) to uridine 5'-monophosphate (UMP). The chain is Orotidine 5'-phosphate decarboxylase from Prochlorococcus marinus (strain NATL2A).